Here is a 104-residue protein sequence, read N- to C-terminus: Iron-sulfur cluster assembly protein CyaY (104 aa).

The protein belongs to the frataxin family.

In terms of biological role, involved in iron-sulfur (Fe-S) cluster assembly. May act as a regulator of Fe-S biogenesis. This is Iron-sulfur cluster assembly protein CyaY from Vibrio parahaemolyticus serotype O3:K6 (strain RIMD 2210633).